A 994-amino-acid chain; its full sequence is Glycine dehydrogenase (decarboxylating), mitochondrial (994 aa).

The N-terminal 21 residues, 1–21 (MLKLLRNNGINKLKSNLIRNY), are a transit peptide targeting the mitochondrion. Lys742 carries the post-translational modification N6-(pyridoxal phosphate)lysine.

The protein belongs to the GcvP family. Homodimer. The glycine cleavage system is composed of four proteins: P, T, L and H. Pyridoxal 5'-phosphate is required as a cofactor.

Its subcellular location is the mitochondrion. It catalyses the reaction N(6)-[(R)-lipoyl]-L-lysyl-[glycine-cleavage complex H protein] + glycine + H(+) = N(6)-[(R)-S(8)-aminomethyldihydrolipoyl]-L-lysyl-[glycine-cleavage complex H protein] + CO2. In terms of biological role, the glycine cleavage system catalyzes the degradation of glycine. The P protein binds the alpha-amino group of glycine through its pyridoxal phosphate cofactor; CO(2) is released and the remaining methylamine moiety is then transferred to the lipoamide cofactor of the H protein. This chain is Glycine dehydrogenase (decarboxylating), mitochondrial (gcvP), found in Dictyostelium discoideum (Social amoeba).